The following is a 190-amino-acid chain: dTTP/UTP pyrophosphatase (190 aa).

Catalysis depends on Asp68, which acts as the Proton acceptor.

Belongs to the Maf family. YhdE subfamily. Requires a divalent metal cation as cofactor.

Its subcellular location is the cytoplasm. It carries out the reaction dTTP + H2O = dTMP + diphosphate + H(+). The catalysed reaction is UTP + H2O = UMP + diphosphate + H(+). Nucleoside triphosphate pyrophosphatase that hydrolyzes dTTP and UTP. May have a dual role in cell division arrest and in preventing the incorporation of modified nucleotides into cellular nucleic acids. In Pyrococcus furiosus (strain ATCC 43587 / DSM 3638 / JCM 8422 / Vc1), this protein is dTTP/UTP pyrophosphatase.